Here is a 142-residue protein sequence, read N- to C-terminus: Nucleoside diphosphate kinase (142 aa).

Residues Lys11, Phe59, Arg87, Thr93, Arg104, and Asn114 each contribute to the ATP site. Residue His117 is the Pros-phosphohistidine intermediate of the active site.

It belongs to the NDK family. As to quaternary structure, homotetramer. Requires Mg(2+) as cofactor.

It localises to the cytoplasm. It catalyses the reaction a 2'-deoxyribonucleoside 5'-diphosphate + ATP = a 2'-deoxyribonucleoside 5'-triphosphate + ADP. It carries out the reaction a ribonucleoside 5'-diphosphate + ATP = a ribonucleoside 5'-triphosphate + ADP. Functionally, major role in the synthesis of nucleoside triphosphates other than ATP. The ATP gamma phosphate is transferred to the NDP beta phosphate via a ping-pong mechanism, using a phosphorylated active-site intermediate. In Thiobacillus denitrificans (strain ATCC 25259 / T1), this protein is Nucleoside diphosphate kinase.